Reading from the N-terminus, the 301-residue chain is Small ribosomal subunit protein uS2 (301 aa).

It belongs to the universal ribosomal protein uS2 family. As to quaternary structure, component of the small ribosomal subunit. Mature ribosomes consist of a small (40S) and a large (60S) subunit. The 40S subunit contains about 33 different proteins and 1 molecule of RNA (18S). The 60S subunit contains about 49 different proteins and 3 molecules of RNA (25S, 5.8S and 5S). Interacts with RPS21.

The protein resides in the cytoplasm. Functionally, required for the assembly and/or stability of the 40S ribosomal subunit. Required for the processing of the 20S rRNA-precursor to mature 18S rRNA in a late step of the maturation of 40S ribosomal subunits. The chain is Small ribosomal subunit protein uS2 from Ajellomyces dermatitidis (strain ER-3 / ATCC MYA-2586) (Blastomyces dermatitidis).